Reading from the N-terminus, the 158-residue chain is Transcription elongation factor GreA (158 aa).

It belongs to the GreA/GreB family.

Functionally, necessary for efficient RNA polymerase transcription elongation past template-encoded arresting sites. The arresting sites in DNA have the property of trapping a certain fraction of elongating RNA polymerases that pass through, resulting in locked ternary complexes. Cleavage of the nascent transcript by cleavage factors such as GreA or GreB allows the resumption of elongation from the new 3'terminus. GreA releases sequences of 2 to 3 nucleotides. This Ralstonia nicotianae (strain ATCC BAA-1114 / GMI1000) (Ralstonia solanacearum) protein is Transcription elongation factor GreA.